Here is a 199-residue protein sequence, read N- to C-terminus: MSRVLIIESSARQQDSVSRQLTQTFISQWKAAHPADQITVRDLAVNPVPHLDINLLGGWMKSAEQRNDSEQASLDRSNELTDELLAADVLVMAAPMYNFAIPSTLKAWLDHVLRAGVTFKYTETGPQGLLSGKRAYVLTARGGIYAGGPADHQEPYLRQVMGFIGINDVTFIHAEGMNLGGDFQEKGLNQANAKLSQVA.

Residues serine 10, serine 16–serine 18, and methionine 96–phenylalanine 99 contribute to the FMN site.

It belongs to the azoreductase type 1 family. Homodimer. FMN is required as a cofactor.

The enzyme catalyses 2 a quinone + NADH + H(+) = 2 a 1,4-benzosemiquinone + NAD(+). It carries out the reaction N,N-dimethyl-1,4-phenylenediamine + anthranilate + 2 NAD(+) = 2-(4-dimethylaminophenyl)diazenylbenzoate + 2 NADH + 2 H(+). In terms of biological role, quinone reductase that provides resistance to thiol-specific stress caused by electrophilic quinones. Its function is as follows. Also exhibits azoreductase activity. Catalyzes the reductive cleavage of the azo bond in aromatic azo compounds to the corresponding amines. This chain is FMN-dependent NADH:quinone oxidoreductase 2, found in Pseudomonas fluorescens (strain Pf0-1).